A 1012-amino-acid polypeptide reads, in one-letter code: 5'-3' exoribonuclease 2 (1012 aa).

The CCHC-type zinc finger occupies 264–281; it reads GKCFLCGQEGHRAADCEG. Disordered stretches follow at residues 411–439, 888–976, and 990–1012; these read VQQRQSERFRRDKARDKARDNARDNAQAS, TFKD…QRQV, and QRKKEKYLRKKAKYAQGAPPKTA. The span at 415–433 shows a compositional bias: basic and acidic residues; the sequence is QSERFRRDKARDKARDNAR. Polar residues predominate over residues 904 to 914; that stretch reads ITPKKMNSPQR. Composition is skewed to basic and acidic residues over residues 918-928 and 950-962; these read WKKDETPQSRE and PQREFTREKKKEN. Basic residues predominate over residues 990–1002; that stretch reads QRKKEKYLRKKAK.

The protein belongs to the 5'-3' exonuclease family. XRN2/RAT1 subfamily. Expressed in roots, leaves, stems and flowers.

It localises to the nucleus. In terms of biological role, possesses 5'-&gt;3' exoribonuclease activity. Acts as an endogenous post-transcriptional gene silencing (PTGS) suppressor. Degrades miRNA-derived loops, excised during miRNA maturation in the nucleus. Involved in pre-rRNA processing. Involved in the primary exonucleolytic shortening of the 5' external transcribed spacer (5'ETS), required for endonucleolytic processing at site P by the U3 snoRNP complex. Involved with XRN3 in the 5'-end processing of 5.8S and 25S rRNAs. Contributes with XRN3 to polyadenylation-dependent nuclear RNA surveillance. Involved in the degradation of aberrant polyadenylated pre-rRNA through 5'-end processing. In Arabidopsis thaliana (Mouse-ear cress), this protein is 5'-3' exoribonuclease 2.